We begin with the raw amino-acid sequence, 190 residues long: NADH-dependent phenylglyoxylate dehydrogenase subunit gamma (190 aa).

In terms of assembly, dimer of heteropentamers composed of an alpha (PadG), a beta (PadI), a gamma (PadE), a delta (PadF) and an epsilon (PadH) subunit.

It catalyses the reaction phenylglyoxylate + NAD(+) + CoA = benzoyl-CoA + CO2 + NADH. Activated by magnesium ions and thiamine diphosphate. Its function is as follows. Involved in the anaerobic metabolism of phenylalanine and phenylacetate. Catalyzes the oxidative decarboxylation of phenylglyoxylate to benzoyl-CoA and CO(2). It can also react slowly with 2-oxo-3-methylbutanoate and use different electron acceptors such as benzyl viologen, methyl viologen, FAD or FMN, but NAD seems to be the physiological electron acceptor. Also catalyzes an isotope exchange between CO(2) and the carboxyl group which proves partial or complete reversibility of the oxidative decarboxylation reaction. The chain is NADH-dependent phenylglyoxylate dehydrogenase subunit gamma (padE) from Aromatoleum evansii (Azoarcus evansii).